The primary structure comprises 620 residues: UDP-glucose:protein N-beta-glucosyltransferase (620 aa).

Belongs to the glycosyltransferase 41 family.

Its subcellular location is the cytoplasm. The catalysed reaction is L-asparaginyl-[protein] + UDP-alpha-D-glucose = N(4)-(beta-D-glucosyl)-L-asparaginyl-[protein] + UDP + H(+). Its pathway is protein modification; protein glycosylation. Its function is as follows. Inverting glycosyltransferase that catalyzes the transfer of one glucose moiety from UDP-glucose to an asparagine residue in peptides and proteins containing the NX(S/T) motif, resulting in their modification with a beta-linked 1,N-glucose. Likely acts as a key component of a general protein glycosylation system. The sequence is that of UDP-glucose:protein N-beta-glucosyltransferase from Actinobacillus pleuropneumoniae serotype 5b (strain L20).